The sequence spans 1436 residues: MAP kinase kinase kinase win1 (1436 aa).

A disordered region spans residues 56 to 85 (LELPNNGKEENHRRPSVARSSSDRSKASAK). Basic and acidic residues predominate over residues 76–85 (SSDRSKASAK). Residue serine 224 is modified to Phosphoserine. Threonine 226 carries the phosphothreonine modification. Positions 282 to 1123 (EDSDLDSETS…SNITIRWQQG (842 aa)) are interaction with tea4. Residues 1120 to 1406 (WQQGGLIGSG…AAELLMDPWV (287 aa)) form the Protein kinase domain. ATP-binding positions include 1126–1134 (IGSGSFGTV) and lysine 1149. The active-site Proton acceptor is aspartate 1244.

This sequence belongs to the protein kinase superfamily. STE Ser/Thr protein kinase family. MAP kinase kinase kinase subfamily. In terms of assembly, interacts with tea4.

The catalysed reaction is L-seryl-[protein] + ATP = O-phospho-L-seryl-[protein] + ADP + H(+). It catalyses the reaction L-threonyl-[protein] + ATP = O-phospho-L-threonyl-[protein] + ADP + H(+). Its function is as follows. Involved in a signal transduction pathway that is activated by changes in the osmolarity of the extracellular environment. Activates the wis1 MAP kinase kinase by phosphorylation. This chain is MAP kinase kinase kinase win1 (win1), found in Schizosaccharomyces pombe (strain 972 / ATCC 24843) (Fission yeast).